Reading from the N-terminus, the 267-residue chain is NAD kinase (267 aa).

The active-site Proton acceptor is the aspartate 45. Residues aspartate 45–glycine 46, asparagine 121–glutamate 122, arginine 147, aspartate 149, threonine 160–serine 165, and alanine 184 contribute to the NAD(+) site.

The protein belongs to the NAD kinase family. A divalent metal cation serves as cofactor.

Its subcellular location is the cytoplasm. The enzyme catalyses NAD(+) + ATP = ADP + NADP(+) + H(+). In terms of biological role, involved in the regulation of the intracellular balance of NAD and NADP, and is a key enzyme in the biosynthesis of NADP. Catalyzes specifically the phosphorylation on 2'-hydroxyl of the adenosine moiety of NAD to yield NADP. The polypeptide is NAD kinase (Lactobacillus acidophilus (strain ATCC 700396 / NCK56 / N2 / NCFM)).